The chain runs to 482 residues: Chitobiosyldiphosphodolichol beta-mannosyltransferase (482 aa).

Residues 1–2 (MA) lie on the Lumenal side of the membrane. The chain crosses the membrane as a helical span at residues 3 to 23 (ASCVALLVLALLLLVLLLGLW). Topologically, residues 24–99 (KRGRQTGRAR…DLRGLGAGPR (76 aa)) are cytoplasmic. Residues 100-120 (ILQYGVKVVFQAVYLLWKMMR) constitute an intramembrane region (helical). At 121–482 (MDPAAYIFLQ…PCGHPSCRGF (362 aa)) the chain is on the cytoplasmic side. Ser242 carries the phosphoserine modification.

This sequence belongs to the glycosyltransferase group 1 family. Glycosyltransferase 33 subfamily.

The protein resides in the endoplasmic reticulum membrane. It carries out the reaction an N,N'-diacetylchitobiosyl-diphospho-di-trans,poly-cis-dolichol + GDP-alpha-D-mannose = a beta-D-Man-(1-&gt;4)-beta-D-GlcNAc-(1-&gt;4)-alpha-D-GlcNAc-diphospho-di-trans,poly-cis-dolichol + GDP + H(+). It participates in protein modification; protein glycosylation. Its function is as follows. Mannosyltransferase that operates in the biosynthetic pathway of dolichol-linked oligosaccharides, the glycan precursors employed in protein asparagine (N)-glycosylation. The assembly of dolichol-linked oligosaccharides begins on the cytosolic side of the endoplasmic reticulum membrane and finishes in its lumen. The sequential addition of sugars to dolichol pyrophosphate produces dolichol-linked oligosaccharides containing fourteen sugars, including two GlcNAcs, nine mannoses and three glucoses. Once assembled, the oligosaccharide is transferred from the lipid to nascent proteins by oligosaccharyltransferases. Catalyzes, on the cytoplasmic face of the endoplasmic reticulum, the addition of the first mannose residues to the dolichol-linked oligosaccharide chain, to produce Man1GlcNAc(2)-PP-dolichol core oligosaccharide. Man1GlcNAc(2)-PP-dolichol is a substrate for ALG2, the following enzyme in the biosynthetic pathway. This Mus musculus (Mouse) protein is Chitobiosyldiphosphodolichol beta-mannosyltransferase.